The sequence spans 475 residues: Methylenetetrahydrofolate--tRNA-(uracil-5-)-methyltransferase TrmFO (475 aa).

Residue glycine 13 to glycine 18 participates in FAD binding.

This sequence belongs to the MnmG family. TrmFO subfamily. The cofactor is FAD.

It is found in the cytoplasm. The enzyme catalyses uridine(54) in tRNA + (6R)-5,10-methylene-5,6,7,8-tetrahydrofolate + NADH + H(+) = 5-methyluridine(54) in tRNA + (6S)-5,6,7,8-tetrahydrofolate + NAD(+). It catalyses the reaction uridine(54) in tRNA + (6R)-5,10-methylene-5,6,7,8-tetrahydrofolate + NADPH + H(+) = 5-methyluridine(54) in tRNA + (6S)-5,6,7,8-tetrahydrofolate + NADP(+). Functionally, catalyzes the folate-dependent formation of 5-methyl-uridine at position 54 (M-5-U54) in all tRNAs. The chain is Methylenetetrahydrofolate--tRNA-(uracil-5-)-methyltransferase TrmFO from Bradyrhizobium diazoefficiens (strain JCM 10833 / BCRC 13528 / IAM 13628 / NBRC 14792 / USDA 110).